The sequence spans 589 residues: Proline--tRNA ligase (589 aa).

The protein belongs to the class-II aminoacyl-tRNA synthetase family. ProS type 1 subfamily. As to quaternary structure, homodimer.

The protein resides in the cytoplasm. It carries out the reaction tRNA(Pro) + L-proline + ATP = L-prolyl-tRNA(Pro) + AMP + diphosphate. Functionally, catalyzes the attachment of proline to tRNA(Pro) in a two-step reaction: proline is first activated by ATP to form Pro-AMP and then transferred to the acceptor end of tRNA(Pro). As ProRS can inadvertently accommodate and process non-cognate amino acids such as alanine and cysteine, to avoid such errors it has two additional distinct editing activities against alanine. One activity is designated as 'pretransfer' editing and involves the tRNA(Pro)-independent hydrolysis of activated Ala-AMP. The other activity is designated 'posttransfer' editing and involves deacylation of mischarged Ala-tRNA(Pro). The misacylated Cys-tRNA(Pro) is not edited by ProRS. The polypeptide is Proline--tRNA ligase (Corynebacterium aurimucosum (strain ATCC 700975 / DSM 44827 / CIP 107346 / CN-1) (Corynebacterium nigricans)).